The chain runs to 218 residues: Stress response regulator protein 1 (218 aa).

In terms of domain architecture, Response regulatory spans 90–209 (RFLLVDDNSI…YRVVLDVVDN (120 aa)). A 4-aspartylphosphate modification is found at aspartate 142.

Its function is as follows. Required for stress adaptation, morphogenesis and virulence. The sequence is that of Stress response regulator protein 1 (SRR1) from Meyerozyma guilliermondii (strain ATCC 6260 / CBS 566 / DSM 6381 / JCM 1539 / NBRC 10279 / NRRL Y-324) (Yeast).